A 492-amino-acid chain; its full sequence is Phytoene desaturase (lycopene-forming) (492 aa).

5–38 (TVIGAGFGGLALAIRLQAAGIPVLLLEQRDKPGG) is an FAD binding site.

The protein belongs to the carotenoid/retinoid oxidoreductase family. It depends on FAD as a cofactor.

It localises to the cell membrane. The catalysed reaction is 15-cis-phytoene + 4 A = all-trans-lycopene + 4 AH2. It functions in the pathway carotenoid biosynthesis; lycopene biosynthesis. Inhibited by NAD and NADP. Converts 15-cis-phytoene into all-trans-lycopene via the intermediary of all-trans-phytofluene, all-trans-zeta-carotene and all-trans-neurosporene, by the introduction of four double bonds. This chain is Phytoene desaturase (lycopene-forming) (crtI), found in Pantoea ananas (Erwinia uredovora).